Consider the following 344-residue polypeptide: S-adenosylmethionine:tRNA ribosyltransferase-isomerase (344 aa).

This sequence belongs to the QueA family. As to quaternary structure, monomer.

Its subcellular location is the cytoplasm. It catalyses the reaction 7-aminomethyl-7-carbaguanosine(34) in tRNA + S-adenosyl-L-methionine = epoxyqueuosine(34) in tRNA + adenine + L-methionine + 2 H(+). The protein operates within tRNA modification; tRNA-queuosine biosynthesis. Functionally, transfers and isomerizes the ribose moiety from AdoMet to the 7-aminomethyl group of 7-deazaguanine (preQ1-tRNA) to give epoxyqueuosine (oQ-tRNA). In Heliobacterium modesticaldum (strain ATCC 51547 / Ice1), this protein is S-adenosylmethionine:tRNA ribosyltransferase-isomerase.